A 256-amino-acid polypeptide reads, in one-letter code: tRNA (guanine-N(7)-)-methyltransferase (256 aa).

S-adenosyl-L-methionine contacts are provided by glutamate 85, glutamate 110, aspartate 137, and aspartate 159. Aspartate 159 is an active-site residue. The substrate site is built by lysine 163 and aspartate 195.

The protein belongs to the class I-like SAM-binding methyltransferase superfamily. TrmB family.

The enzyme catalyses guanosine(46) in tRNA + S-adenosyl-L-methionine = N(7)-methylguanosine(46) in tRNA + S-adenosyl-L-homocysteine. It participates in tRNA modification; N(7)-methylguanine-tRNA biosynthesis. Its function is as follows. Catalyzes the formation of N(7)-methylguanine at position 46 (m7G46) in tRNA. This Rhodopseudomonas palustris (strain HaA2) protein is tRNA (guanine-N(7)-)-methyltransferase.